The chain runs to 210 residues: Urease accessory protein UreE (210 aa).

Residues 144–210 form a disordered region; sequence PEGGAYAAGG…GHAHPHSLAR (67 aa). Basic and acidic residues predominate over residues 156–202; the sequence is HGHDHPHHDHGHDHAHAHAHGTEACDHEHSHDHDCGHHHDHGQDYGH.

Belongs to the UreE family.

Its subcellular location is the cytoplasm. Involved in urease metallocenter assembly. Binds nickel. Probably functions as a nickel donor during metallocenter assembly. The polypeptide is Urease accessory protein UreE (Paracidovorax citrulli (strain AAC00-1) (Acidovorax citrulli)).